Consider the following 438-residue polypeptide: Probable D-serine dehydratase (438 aa).

N6-(pyridoxal phosphate)lysine is present on Lys-114.

The protein belongs to the serine/threonine dehydratase family. DsdA subfamily. Pyridoxal 5'-phosphate serves as cofactor.

It catalyses the reaction D-serine = pyruvate + NH4(+). This chain is Probable D-serine dehydratase, found in Histophilus somni (strain 2336) (Haemophilus somnus).